Here is a 135-residue protein sequence, read N- to C-terminus: ATP synthase epsilon chain (135 aa).

The protein belongs to the ATPase epsilon chain family. In terms of assembly, F-type ATPases have 2 components, CF(1) - the catalytic core - and CF(0) - the membrane proton channel. CF(1) has five subunits: alpha(3), beta(3), gamma(1), delta(1), epsilon(1). CF(0) has three main subunits: a, b and c.

The protein resides in the cell inner membrane. Produces ATP from ADP in the presence of a proton gradient across the membrane. This is ATP synthase epsilon chain from Rhizobium etli (strain ATCC 51251 / DSM 11541 / JCM 21823 / NBRC 15573 / CFN 42).